A 638-amino-acid chain; its full sequence is MDLWQLLLTLALAGSSDAFSGSEPTAAILSRASWSLQSVNPGLKTNSSKEPKFTKCRSPERETFSCHWTDAVHHGSKSLGPIQLFYTRRNIQGQTQEWKECPDYVSAGENSCYFNSSFTSVWIPYCIKLTSNGDTVDGKCFSVDEIVQPDPPIALNWTLLNVSLTGIHADILVRWEAPPNADIQKGWMVLEYELQYKEVNETKWKMMDPILSTSVPVYSLKVDKEYEVLVRSKRRNSRNYGEFSEVLYVTLPQMNQFTCEEDFYFPWLLIIIFGIFGLTVMLFVFLFSKQQRIKMLILPPVPVPKIKGINPDLLKEGKLEEVNAILAIHDSYKPEFHSDDSWVEFIELDIDEPDEKNEGSDTDRLLSSDHQKSHSNLGVKDGDSGRTSCYEPDILETDFNANNIHEGTSEVAQPQRLKGEADLLCLDQKNQNKSPYHDACPATQQPSVIQAEKNKPQPLPTDGAESTHQAAHIQLSNPSSLANIDFYAQVSDITPAGSVVLSPGQKNKAGMSQCDMHLEMVSLCQEDFIMDNAYFCEADAKKCIPVAPHIKVESHIEPSFNQEDIYITTESLTTTAGRPGTTEHIPGSEMPVPDYTSIHIVQSPQGLILNATALPLPGKEFLSSCGYVSTDQLNKIMP.

An N-terminal signal peptide occupies residues 1–18; that stretch reads MDLWQLLLTLALAGSSDA. Topologically, residues 19–264 are extracellular; sequence FSGSEPTAAI…NQFTCEEDFY (246 aa). The N-linked (GlcNAc...) asparagine glycan is linked to Asn46. Cystine bridges form between Cys56-Cys66 and Cys101-Cys112. Residue Asn115 is glycosylated (N-linked (GlcNAc...) asparagine). A disulfide bridge connects residues Cys126 and Cys140. Residues 151 to 254 enclose the Fibronectin type-III domain; that stretch reads PPIALNWTLL…EVLYVTLPQM (104 aa). 3 N-linked (GlcNAc...) asparagine glycosylation sites follow: Asn156, Asn161, and Asn200. The WSXWS motif motif lies at 240–244; it reads YGEFS. The chain crosses the membrane as a helical span at residues 265–288; that stretch reads FPWLLIIIFGIFGLTVMLFVFLFS. Residues 289–638 lie on the Cytoplasmic side of the membrane; sequence KQQRIKMLIL…STDQLNKIMP (350 aa). The segment at 294–379 is required for JAK2 binding; the sequence is KMLILPPVPV…HQKSHSNLGV (86 aa). The Box 1 motif motif lies at 297–305; that stretch reads ILPPVPVPK. Residues 340-349 carry the UbE motif motif; it reads DSWVEFIELD. Ser341 bears the Phosphoserine mark. The disordered stretch occupies residues 353 to 388; it reads PDEKNEGSDTDRLLSSDHQKSHSNLGVKDGDSGRTS. Residues 356–372 are compositionally biased toward basic and acidic residues; it reads KNEGSDTDRLLSSDHQK. Phosphotyrosine is present on residues Tyr487 and Tyr595.

This sequence belongs to the type I cytokine receptor family. Type 1 subfamily. In terms of assembly, on growth hormone (GH) binding, forms homodimers and binds JAK2 via a box 1-containing domain. The soluble form (GHBP) is produced by phorbol ester-promoted proteolytic cleavage at the cell surface (shedding) by ADAM17/TACE. Shedding is inhibited by growth hormone (GH) binding to the receptor probably due to a conformational change in GHR rendering the receptor inaccessible to ADAM17. Post-translationally, on GH binding, phosphorylated on tyrosine residues in the cytoplasmic domain by JAK2. In terms of processing, ubiquitinated by the ECS(SOCS2) complex following ligand-binding and phosphorylation by JAK2, leading to its degradation by the proteasome. Regulation by the ECS(SOCS2) complex acts as a negative feedback loop of growth hormone receptor signaling. Ubiquitination is not sufficient for GHR internalization.

It is found in the cell membrane. The protein localises to the secreted. In terms of biological role, receptor for pituitary gland growth hormone (GH1) involved in regulating postnatal body growth. On ligand binding, couples to the JAK2/STAT5 pathway. The soluble form (GHBP) acts as a reservoir of growth hormone in plasma and may be a modulator/inhibitor of GH signaling. The chain is Growth hormone receptor (GHR) from Macaca mulatta (Rhesus macaque).